The following is a 97-amino-acid chain: Large ribosomal subunit protein bL28 (97 aa).

Belongs to the bacterial ribosomal protein bL28 family.

The polypeptide is Large ribosomal subunit protein bL28 (Rickettsia canadensis (strain McKiel)).